Here is an 84-residue protein sequence, read N- to C-terminus: U4-theraphotoxin-Hhn1b (84 aa).

An N-terminal signal peptide occupies residues 1 to 22 (MKVTLIAILTCAAVLVLHTTAA). Residues 23–47 (EELEESQLMEVGMPDTELAAVDEER) constitute a propeptide that is removed on maturation. Cystine bridges form between Cys51–Cys65, Cys55–Cys76, and Cys70–Cys81.

The protein belongs to the neurotoxin 12 (Hwtx-2) family. 02 (Hwtx-2) subfamily. In terms of tissue distribution, expressed by the venom gland.

The protein localises to the secreted. Postsynaptic neurotoxin. This Cyriopagopus hainanus (Chinese bird spider) protein is U4-theraphotoxin-Hhn1b.